The chain runs to 1147 residues: GPI inositol-deacylase (1147 aa).

Residues 1-94 are disordered; it reads MRRHSSGSSE…RTSPSSPLGL (94 aa). Residue asparagine 23 is glycosylated (N-linked (GlcNAc...) asparagine). The segment covering 28 to 49 has biased composition (basic and acidic residues); sequence SAKDSRSSAHPTTKLDHNRNAD. Positions 50–63 are enriched in low complexity; sequence RPPSFSISRRSSSI. N-linked (GlcNAc...) asparagine glycosylation is present at asparagine 74. A helical transmembrane segment spans residues 127–147; the sequence is AITFSALVAAIVGIGFLVAVL. Serine 310 is an active-site residue. 2 helical membrane-spanning segments follow: residues 795 to 815 and 843 to 863; these read LYMRYRTVFAAFPLFIVALVL and IPLMLASLTLLTLSTGIMAPA. Asparagine 865 and asparagine 873 each carry an N-linked (GlcNAc...) asparagine glycan. 3 consecutive transmembrane segments (helical) span residues 893–913, 918–938, and 965–985; these read PLFLFLIPLIAIVCVGVCTVF, LTLTHLLGVLASLVTFHPGWI, and VLLLLVTTMVPYQFAYLVACL. Residue asparagine 1011 is glycosylated (N-linked (GlcNAc...) asparagine). 3 consecutive transmembrane segments (helical) span residues 1015 to 1035, 1052 to 1072, and 1084 to 1104; these read SIFILMLWILPINLPTFVVWV, VLSVMPFIVLVETLTTGKMIP, and LLLFGMAVYAAVYGVTYAYTL.

It belongs to the GPI inositol-deacylase family.

Its subcellular location is the endoplasmic reticulum membrane. Involved in inositol deacylation of GPI-anchored proteins which plays important roles in the quality control and ER-associated degradation of GPI-anchored proteins. This is GPI inositol-deacylase (BST1) from Chaetomium globosum (strain ATCC 6205 / CBS 148.51 / DSM 1962 / NBRC 6347 / NRRL 1970) (Soil fungus).